A 465-amino-acid chain; its full sequence is Lysophospholipid acyltransferase 2 (465 aa).

The next 9 membrane-spanning stretches (helical) occupy residues V15–L35, F55–I75, L86–Y106, S161–F181, A214–L234, Y266–W286, A356–I376, V399–F419, and V434–V454. H359 is a catalytic residue.

Belongs to the membrane-bound acyltransferase family. As to quaternary structure, interacts with GPAT9 and DGAT1. Expressed in rosette leaves, pollen grains, developing embryos and developing seeds.

It localises to the endoplasmic reticulum membrane. The catalysed reaction is a 1-acyl-sn-glycero-3-phosphocholine + an acyl-CoA = a 1,2-diacyl-sn-glycero-3-phosphocholine + CoA. It catalyses the reaction 1-(9Z-octadecenoyl)-sn-glycero-3-phosphocholine + (9Z)-octadecenoyl-CoA = 1,2-di-(9Z-octadecenoyl)-sn-glycero-3-phosphocholine + CoA. It carries out the reaction 1-(9Z-octadecenoyl)-sn-glycero-3-phosphocholine + (9Z,12Z)-octadecadienoyl-CoA = 1-(9Z)-octadecenoyl-2-(9Z,12Z)-octadecadienoyl-sn-glycero-3-phosphocholine + CoA. The enzyme catalyses (9Z,12Z,15Z)-octadecatrienoyl-CoA + 1-(9Z-octadecenoyl)-sn-glycero-3-phosphocholine = 1-(9Z-octadecaenoyl)-2-(9Z,12Z,15Z-octadecatrienoyl)-sn-glycero-3-phosphocholine + CoA. The catalysed reaction is a 1-acyl-sn-glycero-3-phosphoethanolamine + an acyl-CoA = a 1,2-diacyl-sn-glycero-3-phosphoethanolamine + CoA. It catalyses the reaction a 1-acyl-sn-glycero-3-phospho-L-serine + an acyl-CoA = a 1,2-diacyl-sn-glycero-3-phospho-L-serine + CoA. In terms of biological role, lysophospholipid acyltransferase with broad specificity. Mediates the conversion of lysophosphatidylethanolamine (1-acyl-sn-glycero-3-phosphoethanolamine or LPE) into phosphatidylethanolamine (1,2-diacyl-sn-glycero-3-phosphoethanolamine or PE) (LPEAT activity). Catalyzes the acylation of lysophosphatidylserine (1-acyl-2-hydroxy-sn-glycero-3-phospho-L-serine or LPS) into phosphatidylserine (1,2-diacyl-sn-glycero-3-phospho-L-serine or PS) (LPSAT activity). Can convert lysophosphatidylcholine (1-acyl-sn-glycero-3-phosphocholine or LPC) into phosphatidylcholine (1,2-diacyl-sn-glycero-3-phosphocholine or PC) (LPCAT activity). Exhibits preference for C18-unsaturated acyl-CoA when transferring an acyl group to lysophosphatidylcholine. Can also utilize lysophosphatidylglycerol (LPG) as substrate in vitro. Has neither activity towards lysophosphatidic acid (LPA) nor lysophosphatidylinositol (LPI). Lysophospholipid acyltransferases catalyze the reacylation step of the phospholipid remodeling pathway also known as the Lands cycle. The primary function of the Lands cycle is to provide a route for acyl remodeling to modify fatty acid (FA) composition of phospholipids derived from the Kennedy pathway. Is involved in PC acyl editing and phosphocholine headgroup exchange between PC and diacylglycerols. This processes control the majority of acyl fluxes through PC to provide polyunsaturated fatty acids for triacylglycerols synthesis in seeds. Involved with LPCAT1 in the direct incorporation of newly synthesized fatty acids exported form the chloroplast into PC through acyl editing. The polypeptide is Lysophospholipid acyltransferase 2 (Arabidopsis thaliana (Mouse-ear cress)).